Consider the following 221-residue polypeptide: Octanoyltransferase (221 aa).

Positions 36–221 constitute a BPL/LPL catalytic domain; it reads KKEDNQLFFC…LRSIFMEIFA (186 aa). Substrate contacts are provided by residues 81–88, 154–156, and 167–169; these read RGGDITYH, AIG, and GFA. Residue C185 is the Acyl-thioester intermediate of the active site.

The protein belongs to the LipB family.

The protein resides in the cytoplasm. It carries out the reaction octanoyl-[ACP] + L-lysyl-[protein] = N(6)-octanoyl-L-lysyl-[protein] + holo-[ACP] + H(+). The protein operates within protein modification; protein lipoylation via endogenous pathway; protein N(6)-(lipoyl)lysine from octanoyl-[acyl-carrier-protein]: step 1/2. Functionally, catalyzes the transfer of endogenously produced octanoic acid from octanoyl-acyl-carrier-protein onto the lipoyl domains of lipoate-dependent enzymes. Lipoyl-ACP can also act as a substrate although octanoyl-ACP is likely to be the physiological substrate. This Parabacteroides distasonis (strain ATCC 8503 / DSM 20701 / CIP 104284 / JCM 5825 / NCTC 11152) protein is Octanoyltransferase.